The sequence spans 636 residues: Chaperone protein DnaK (636 aa).

Threonine 197 is subject to Phosphothreonine; by autocatalysis. Low complexity predominate over residues 596–607 (LYQQAQEQQQSG). The interval 596–636 (LYQQAQEQQQSGSSGGSSDEDVVEDAEIVDEEDEEKRDDNR) is disordered. Positions 613–636 (SDEDVVEDAEIVDEEDEEKRDDNR) are enriched in acidic residues.

Belongs to the heat shock protein 70 family.

Its function is as follows. Acts as a chaperone. The chain is Chaperone protein DnaK from Rubrobacter xylanophilus (strain DSM 9941 / JCM 11954 / NBRC 16129 / PRD-1).